Here is a 212-residue protein sequence, read N- to C-terminus: Elongation factor Ts (212 aa).

The tract at residues 82 to 85 is involved in Mg(2+) ion dislocation from EF-Tu; that stretch reads SDFV.

It belongs to the EF-Ts family.

It is found in the cytoplasm. In terms of biological role, associates with the EF-Tu.GDP complex and induces the exchange of GDP to GTP. It remains bound to the aminoacyl-tRNA.EF-Tu.GTP complex up to the GTP hydrolysis stage on the ribosome. This Solibacter usitatus (strain Ellin6076) protein is Elongation factor Ts.